The chain runs to 176 residues: Oligoribonuclease (176 aa).

The 158-residue stretch at 2 to 159 (EMTGLNPETD…DDILESIEEM (158 aa)) folds into the Exonuclease domain. Y117 is a catalytic residue.

It belongs to the oligoribonuclease family.

It is found in the cytoplasm. 3'-to-5' exoribonuclease specific for small oligoribonucleotides. The chain is Oligoribonuclease from Neisseria gonorrhoeae (strain ATCC 700825 / FA 1090).